Consider the following 344-residue polypeptide: Selenide, water dikinase (344 aa).

Selenocysteine 16 is an active-site residue. Position 16 (selenocysteine 16) is a non-standard amino acid, selenocysteine. ATP contacts are provided by residues lysine 19 and 46–48; that span reads TND. Aspartate 49 is a Mg(2+) binding site. ATP-binding positions include aspartate 66, aspartate 89, and 135–137; that span reads GHT. Aspartate 89 is a Mg(2+) binding site. Aspartate 223 is a binding site for Mg(2+).

It belongs to the selenophosphate synthase 1 family. Class I subfamily. Homodimer. The cofactor is Mg(2+).

The catalysed reaction is hydrogenselenide + ATP + H2O = selenophosphate + AMP + phosphate + 2 H(+). Functionally, synthesizes selenophosphate from selenide and ATP. This Caldanaerobacter subterraneus subsp. tengcongensis (strain DSM 15242 / JCM 11007 / NBRC 100824 / MB4) (Thermoanaerobacter tengcongensis) protein is Selenide, water dikinase.